The chain runs to 137 residues: Small ribosomal subunit protein uS12 (137 aa).

Asp-89 carries the 3-methylthioaspartic acid modification. The interval 105 to 137 (AGVAGRTQRRSKYGAKRPKAGQAAAPAKGKGKK) is disordered. A compositionally biased stretch (basic residues) spans 111-123 (TQRRSKYGAKRPK). Over residues 124 to 137 (AGQAAAPAKGKGKK) the composition is skewed to low complexity.

It belongs to the universal ribosomal protein uS12 family. In terms of assembly, part of the 30S ribosomal subunit. Contacts proteins S8 and S17. May interact with IF1 in the 30S initiation complex.

Functionally, with S4 and S5 plays an important role in translational accuracy. Interacts with and stabilizes bases of the 16S rRNA that are involved in tRNA selection in the A site and with the mRNA backbone. Located at the interface of the 30S and 50S subunits, it traverses the body of the 30S subunit contacting proteins on the other side and probably holding the rRNA structure together. The combined cluster of proteins S8, S12 and S17 appears to hold together the shoulder and platform of the 30S subunit. The protein is Small ribosomal subunit protein uS12 of Phocaeicola vulgatus (strain ATCC 8482 / DSM 1447 / JCM 5826 / CCUG 4940 / NBRC 14291 / NCTC 11154) (Bacteroides vulgatus).